The chain runs to 862 residues: MPEKPALEGLEGKWGSRWQEDGTYLFDRAAAIAAGRDAVYSIDTPPPTASGSLHIGHVFSYTHTDVVARFQRMLGKRVFYPMGWDDNGLPTERRVQNYYGVRCDPTLPYEPGLTPPFEGGDNKSSKAADQKPISRRNFIELCERLTVEDEKQFEALWRSLGLSVDWSQTYRTIGEESLRTSQLAFLRNVKRGEAYQALAPTLWDITFRTAVAQAELEDRDQPSAYHRVAFHGEAGPVFIETTRPELLPACVALVAHPDDERYQPLLGTTVRTPVFGVEVPVVAHHLAQPDKGSGIAMICTFGDITDVTWWRELDLPNRAIIGFDGRIVSDAPEAIDTEAGREAYAQLAGKTVFSAKQTVVELLRASGDLVGEPKPIQHPVKFFEKGDKPLEIVSTRQWYVKNGARDEELRERLIELGRGIDWHPDFMRVRYENWVNGLTGDWLISRQRFFGVPIPVWYPLDAGGNPVFDAPILPLEESLPIDPSSAAAPGYTEQQRGQAGGFVGEHDVMDTWMTSSLTPQLAGGWHRDDELFAAVSPYDLRPQGQDIIRTWLFSTLLRSQLEDGVAPWTHAALSGFIVDPDRKKMSKSKGNVVTPADVLERHGSDAVRYWAASSRLGTDAAFDPQNPTQIKIGRRLAIKLLNAAKFILGFDAPASLDLAQVTVPLDRSMLQQLTDVITDATAALDAYDHARALETTETFFWTFCDDYLELVKERAYGEASTGQVSAVVALRMALSAFLRLFAPVLPFAAEEAWRWWNEGSVHLAAWPAAAETSVGGNDARAVLNVLGRALTGIRGAKTAAKASQRTPVDSAVIAGPAGDLAVIESAADDLRSVGRIVELRFTAGADLAVADIVLTQAPEEER.

Residues 47–57 (PTASGSLHIGH) carry the 'HIGH' region motif. Residues 110–130 (EPGLTPPFEGGDNKSSKAADQ) form a disordered region. Positions 120–129 (GDNKSSKAAD) are enriched in basic and acidic residues. A 'KMSKS' region motif is present at residues 584–588 (KMSKS). Lys587 contacts ATP.

Belongs to the class-I aminoacyl-tRNA synthetase family. ValS type 2 subfamily. Monomer.

Its subcellular location is the cytoplasm. It carries out the reaction tRNA(Val) + L-valine + ATP = L-valyl-tRNA(Val) + AMP + diphosphate. Catalyzes the attachment of valine to tRNA(Val). As ValRS can inadvertently accommodate and process structurally similar amino acids such as threonine, to avoid such errors, it has a 'posttransfer' editing activity that hydrolyzes mischarged Thr-tRNA(Val) in a tRNA-dependent manner. The sequence is that of Valine--tRNA ligase from Leifsonia xyli subsp. xyli (strain CTCB07).